Consider the following 353-residue polypeptide: uncharacterized protein (353 aa).

Residues 1 to 30 (MHLRHLFSPRLRGSLLLGSLLVASSFSTLA) form the signal peptide.

This is an uncharacterized protein from Salmonella typhi.